The sequence spans 115 residues: Large ribosomal subunit protein bL19 (115 aa).

The protein belongs to the bacterial ribosomal protein bL19 family.

In terms of biological role, this protein is located at the 30S-50S ribosomal subunit interface and may play a role in the structure and function of the aminoacyl-tRNA binding site. This Streptococcus sanguinis (strain SK36) protein is Large ribosomal subunit protein bL19.